The chain runs to 328 residues: MAFRFAVDCLGFENKPSEAIEAVLKYWSFHQDLNFILIGDEKAFDGLDILPKNITKKLANSFIEMTDTPLSARRKVNSSMQIAINLVREGNADVVISAGSSAVYASLTNDAFGKINKNTKSAFMSYVPTDNNNWFYFLDVGANKYFTGKELYFLGLMADIFVKKTTTKKTPKIGLLNIGTEENKGFDYHQEAFKLLKADKNLNFLGFVESRFLLDGICDILIADGYSGNLVLKAMEGTFKTIARILKRGYKRNPLAGLFSLGIIKSVAKKFDYKNNAGAVVMGLNKLALKTHGSADKQQFLSTIRLAHLSLKSDLINAIKTSLNNYEE.

It belongs to the PlsX family. In terms of assembly, homodimer. Probably interacts with PlsY.

It is found in the cytoplasm. The enzyme catalyses a fatty acyl-[ACP] + phosphate = an acyl phosphate + holo-[ACP]. Its pathway is lipid metabolism; phospholipid metabolism. Its function is as follows. Catalyzes the reversible formation of acyl-phosphate (acyl-PO(4)) from acyl-[acyl-carrier-protein] (acyl-ACP). This enzyme utilizes acyl-ACP as fatty acyl donor, but not acyl-CoA. The polypeptide is Phosphate acyltransferase (Mycoplasma genitalium (strain ATCC 33530 / DSM 19775 / NCTC 10195 / G37) (Mycoplasmoides genitalium)).